Reading from the N-terminus, the 1245-residue chain is ABC transporter B family member 13 (1245 aa).

Positions 1–14 are enriched in polar residues; that stretch reads MDNTERSSNGNIQA. Residues 1–20 are disordered; it reads MDNTERSSNGNIQAETEAKE. The ABC transmembrane type-1 1 domain occupies 47–336; it reads MLLGGLGACI…AAPSLSAIAK (290 aa). Residues 48 to 68 form a helical membrane-spanning segment; it reads LLGGLGACIHGATLPLFFVFF. The N-linked (GlcNAc...) asparagine glycan is linked to N77. The next 5 helical transmembrane spans lie at 94–114, 171–191, 195–215, 276–296, and 314–334; these read LYLVYLGLVNFVSAWIGVSCW, HVLRYLSQFIAGFVIGFLSVW, LLTLGVVPLIAIAGGGYAIVM, LGVGLTYSLLFCAWALLLWYA, and ILNVIFSGFALGQAAPSLSAI. 2 N-linked (GlcNAc...) asparagine glycosylation sites follow: N351 and N391. The ABC transporter 1 domain maps to 372–607; the sequence is IEFQKVSFAY…GGDYATLVNC (236 aa). 406–413 is an ATP binding site; it reads GPSGSGKS. A compositionally biased stretch (polar residues) spans 610–629; that stretch reads TEPQENSRSIMSETCKSQAG. Residues 610–660 are disordered; the sequence is TEPQENSRSIMSETCKSQAGSSSSRRVSSSRRTSSFRVDQEKTKNDDSKKD. Residues 630-646 show a composition bias toward low complexity; that stretch reads SSSSRRVSSSRRTSSFR. Basic and acidic residues predominate over residues 647–660; sequence VDQEKTKNDDSKKD. Residues 681–969 form the ABC transmembrane type-1 2 domain; the sequence is ALLGSIGAVL…TLALTPDIVK (289 aa). The next 2 membrane-spanning stretches (helical) occupy residues 686 to 706 and 725 to 745; these read IGAVLAGAQTPLFSMGIAYVL and AIIFAGAGIVTAPIYLLQHYF. N778 is a glycosylation site (N-linked (GlcNAc...) asparagine). A run of 4 helical transmembrane segments spans residues 805–822, 828–848, 913–933, and 947–967; these read IVQNLSLTVTALALAFFY, AVVTACFPLLIAASLTEQLFL, LSQFLAFCSYALGLWYVSVLI, and FMVLIVTAFSVSETLALTPDI. An ABC transporter 2 domain is found at 1004–1240; it reads IEFRNVSFVY…PNGFYKQLTS (237 aa). N1008 is a glycosylation site (N-linked (GlcNAc...) asparagine). 1039 to 1046 serves as a coordination point for ATP; it reads GPSGSGKS. N-linked (GlcNAc...) asparagine glycosylation occurs at N1106.

The protein belongs to the ABC transporter superfamily. ABCB family. Multidrug resistance exporter (TC 3.A.1.201) subfamily.

It localises to the membrane. This is ABC transporter B family member 13 (ABCB13) from Arabidopsis thaliana (Mouse-ear cress).